The following is a 309-amino-acid chain: Calcium homeostasis modulator protein 5 (309 aa).

Over Met-1 to Lys-15 the chain is Cytoplasmic. A 1,2-diacyl-sn-glycero-3-phosphate-binding residues include Lys-15, Arg-32, and Val-37. The chain crosses the membrane as a helical span at residues Thr-16–Val-37. Over Ala-38–Thr-45 the chain is Extracellular. Disulfide bonds link Cys-41-Cys-127, Cys-43-Cys-158, and Cys-142-Cys-149. A helical membrane pass occupies residues Glu-46–Asn-70. Over Asn-71–Val-99 the chain is Cytoplasmic. The chain crosses the membrane as a helical span at residues Leu-100–Met-129. A 1,2-diacyl-sn-glycero-3-phosphate-binding residues include Gln-102 and Asn-121. Over Ser-130–Ser-174 the chain is Extracellular. The helical transmembrane segment at Leu-175–Tyr-200 threads the bilayer. Topologically, residues Ala-201–Met-309 are cytoplasmic. Arg-202 provides a ligand contact to a 1,2-diacyl-sn-glycero-3-phosphate.

This sequence belongs to the CALHM family. In terms of assembly, oligomerizes to form undecameric cone-shaped channels.

Its subcellular location is the membrane. Its function is as follows. May assemble to form large pore channels with gating and ion conductance likely regulated by membrane lipids. The chain is Calcium homeostasis modulator protein 5 from Homo sapiens (Human).